A 123-amino-acid chain; its full sequence is MIIGIGTDIIEISRIERAIQRTNTFIERSFTCNEIAYFKLKGFKGNVVAGNFAAKEAISKAIGTGFRGFGLKDIEILRNELGKPIVNLSDKIYNLLEIKEFNMHVSISHSNENAIAYAVMEAI.

Residues D8 and E56 each contribute to the Mg(2+) site.

The protein belongs to the P-Pant transferase superfamily. AcpS family. Requires Mg(2+) as cofactor.

It is found in the cytoplasm. The enzyme catalyses apo-[ACP] + CoA = holo-[ACP] + adenosine 3',5'-bisphosphate + H(+). Transfers the 4'-phosphopantetheine moiety from coenzyme A to a Ser of acyl-carrier-protein. This chain is Holo-[acyl-carrier-protein] synthase, found in Clostridium beijerinckii (strain ATCC 51743 / NCIMB 8052) (Clostridium acetobutylicum).